The following is a 299-amino-acid chain: Porphobilinogen deaminase (299 aa).

Cysteine 234 is modified (S-(dipyrrolylmethanemethyl)cysteine).

Belongs to the HMBS family. As to quaternary structure, monomer. Dipyrromethane serves as cofactor.

The catalysed reaction is 4 porphobilinogen + H2O = hydroxymethylbilane + 4 NH4(+). Its pathway is porphyrin-containing compound metabolism; protoporphyrin-IX biosynthesis; coproporphyrinogen-III from 5-aminolevulinate: step 2/4. In terms of biological role, tetrapolymerization of the monopyrrole PBG into the hydroxymethylbilane pre-uroporphyrinogen in several discrete steps. In Corynebacterium efficiens (strain DSM 44549 / YS-314 / AJ 12310 / JCM 11189 / NBRC 100395), this protein is Porphobilinogen deaminase.